A 20-amino-acid polypeptide reads, in one-letter code: C-reactive protein (20 aa).

The 20-residue stretch at 1 to 20 (SPVAASYRATAGLAGKALDF) folds into the Pentraxin (PTX) domain.

The protein belongs to the pentraxin family. Homodimer; disulfide-linked. It is not known if it assembles into a pentraxin (or pentaxin) structure. Pentraxins have a discoid arrangement of 5 non-covalently bound subunits. Glycosylated.

The protein localises to the secreted. Displays several functions associated with host defense: it promotes agglutination, bacterial capsular swelling, phagocytosis, and complement fixation through its calcium-dependent binding to phosphorylcholine. The protein is C-reactive protein of Mustelus canis (Smooth dogfish).